The sequence spans 440 residues: Protein CyaD (440 aa).

Residues 1–55 (MRRALRELAARHGRVLAASWRQRHRRPAGWFDPVETEFLPSALSLQERPISPTAR) lie on the Cytoplasmic side of the membrane. The chain crosses the membrane as a helical span at residues 56-75 (WLARILMALAAGALVWSVVG). The Periplasmic segment spans residues 76–440 (KTEIVVHAAG…RHAGESLGER (365 aa)).

The protein belongs to the membrane fusion protein (MFP) (TC 8.A.1) family.

It localises to the cell inner membrane. Functionally, cyaD is necessary for transport of calmodulin-sensitive adenylate cyclase-hemolysin (cyclolysin). The chain is Protein CyaD (cyaD) from Bordetella pertussis (strain ATCC 9797 / DSM 5571 / CCUG 30873 / LMG 14455 / NCTC 10739 / 18323).